The sequence spans 170 residues: Calcineurin subunit B type 2 (170 aa).

Gly2 is lipidated: N-myristoyl glycine. EF-hand domains lie at 18–46 (DEIKRLRKRFKKLDLDSSSALSVKEFTSM), 50–85 (QENPLVQRVIDVFDTDGDGQVDFREFILGTSQFSVR), 87–122 (DEEQKLRFAFSIYDMDKDGYISNGELFQVLKMMVGD), and 128–163 (QLQQLVDKTIILLDKDGDGKISFQEFSAVVRSLEIH). Asp63, Asp65, Asp67, Gln69, Glu74, Asp100, Asp102, Asp104, Tyr106, and Glu111 together coordinate Ca(2+). Positions 131-136 (QLVDKT) are calcineurin A binding. Asp141, Asp143, Asp145, Lys147, and Glu152 together coordinate Ca(2+).

Belongs to the calcineurin regulatory subunit family. As to quaternary structure, forms a complex composed of a calmodulin-dependent catalytic subunit (also known as calcineurin A) and a regulatory Ca(2+)-binding subunit (also known as calcineurin B). There are three catalytic subunits, each encoded by a separate gene (PPP3CA, PPP3CB, and PPP3CC) and two regulatory subunits which are also encoded by separate genes (PPP3R1 and PPP3R2). Interacts with SPATA33 (via PQIIIT motif).

It localises to the mitochondrion. Its function is as follows. Regulatory subunit of calcineurin, a calcium-dependent, calmodulin stimulated protein phosphatase. Confers calcium sensitivity. The chain is Calcineurin subunit B type 2 (PPP3R2) from Bos taurus (Bovine).